The following is a 515-amino-acid chain: MGKLKKKGERGAATNYVSRNQALKKLQLSLPDFRRLCILKGIYPVEPKNKKKVNKGSTANKTYYYVKDIQWLAHEPVLNKFREFKVFLRKLKKAIAKEQPGTADRLEDNKPVYTLDHIVKERYPTFIDALRDLDDALSMLFLFSIMPQTDKIQAAVVQDCRRLSVEFQHYIISSRSLRKVFFSIKGIYFQAEIQGQTITWITPYQFCQDPPTDVDFRVMLTFVDFYKTMMGFINFKLYNNLNMHYPPVLADKTDKKLDTNYCKDTEVEDEVLAALNHTLKIIQTQEEDLEVDEFPIDPNSEDAEAIQAQKEEETKLERLKNLFSECKVFLSREVPRETLVFMIRSFGGQVSWDVSTAIGATFAETDESITHQIVDRPSQGHQFLSRYYIQPQWVADSINQGKLLPVEEYFPGEELPPHLSPFVKEEEGDYVPPERKAIMDQEMDTNQNEVTEEEEVPDMTREEKELAVAAMPRKDRRLYEKIMHSKKKKRSEVRKLESKRKVHDEEKAKKKLKSS.

Positions 270–327 (EVLAALNHTLKIIQTQEEDLEVDEFPIDPNSEDAEAIQAQKEEETKLERLKNLFSECK) form a coiled coil. The BRCT domain occupies 318 to 411 (RLKNLFSECK…KLLPVEEYFP (94 aa)). Residues 477-515 (RLYEKIMHSKKKKRSEVRKLESKRKVHDEEKAKKKLKSS) are disordered. Residues 484-501 (HSKKKKRSEVRKLESKRK) show a composition bias toward basic residues.

This sequence belongs to the pescadillo family.

It localises to the nucleus. It is found in the nucleolus. The protein resides in the nucleoplasm. Functionally, required for maturation of ribosomal RNAs and formation of the large ribosomal subunit. This Nematostella vectensis (Starlet sea anemone) protein is Pescadillo homolog.